We begin with the raw amino-acid sequence, 258 residues long: Homeobox-leucine zipper protein ATHB-7 (258 aa).

The segment at residues 29–88 (NKNNQRRFSDEQIKSLEMMFESETRLEPRKKVQLARELGLQPRQVAIWFQNKRARWKSKQ) is a DNA-binding region (homeobox). Residues 89–124 (LETEYNILRQNYDNLASQFESLKKEKQALVSELQRL) form a leucine-zipper region. Residues 149–183 (SSTHHESENEENRRRKPEEVRPEMEMKDDKGHHGV) are disordered. Positions 151 to 183 (THHESENEENRRRKPEEVRPEMEMKDDKGHHGV) are enriched in basic and acidic residues.

The protein belongs to the HD-ZIP homeobox family. Class I subfamily. Interacts with TBP2 and TFIIB1. In terms of tissue distribution, widely expressed.

The protein resides in the nucleus. Probable transcription activator that may act as growth regulators in response to water deficit. In Arabidopsis thaliana (Mouse-ear cress), this protein is Homeobox-leucine zipper protein ATHB-7 (ATHB-7).